A 504-amino-acid polypeptide reads, in one-letter code: Maturase K (504 aa).

The protein belongs to the intron maturase 2 family. MatK subfamily.

The protein localises to the plastid. The protein resides in the chloroplast. Functionally, usually encoded in the trnK tRNA gene intron. Probably assists in splicing its own and other chloroplast group II introns. The chain is Maturase K from Fagus crenata (Japanese beech).